The following is a 297-amino-acid chain: Homoserine kinase (297 aa).

82-92 (PLTRGLGSSAS) contacts ATP.

Belongs to the GHMP kinase family. Homoserine kinase subfamily.

Its subcellular location is the cytoplasm. It carries out the reaction L-homoserine + ATP = O-phospho-L-homoserine + ADP + H(+). Its pathway is amino-acid biosynthesis; L-threonine biosynthesis; L-threonine from L-aspartate: step 4/5. Functionally, catalyzes the ATP-dependent phosphorylation of L-homoserine to L-homoserine phosphate. This chain is Homoserine kinase, found in Bacillus cereus (strain ATCC 10987 / NRS 248).